The sequence spans 404 residues: Activity-regulated cytoskeleton-associated protein (404 aa).

Positions Glu-51–Val-78 form a coiled coil. The disordered stretch occupies residues Val-351 to Ile-404. Residues Pro-363–Gln-393 show a composition bias toward polar residues. Over residues Pro-394–Ile-404 the composition is skewed to pro residues.

It belongs to the ARC/ARG3.1 family. In terms of assembly, homooligomer; homooligomerizes into virion-like capsids. Palmitoylation anchors the protein into the membrane by allowing direct insertion into the hydrophobic core of the lipid bilayer. In terms of tissue distribution, expressed at various levels throughout the brain.

It is found in the extracellular vesicle membrane. Its subcellular location is the postsynaptic cell membrane. The protein localises to the synapse. The protein resides in the postsynaptic density. It localises to the early endosome membrane. It is found in the cell projection. Its subcellular location is the dendrite. The protein localises to the cytoplasm. The protein resides in the cytoskeleton. It localises to the cell cortex. It is found in the dendritic spine. In terms of biological role, master regulator of synaptic plasticity that self-assembles into virion-like capsids that encapsulate RNAs and mediate intercellular RNA transfer in the nervous system. ARC protein is released from neurons in extracellular vesicles that mediate the transfer of ARC mRNA into new target cells, where ARC mRNA can undergo activity-dependent translation. ARC capsids are endocytosed and are able to transfer ARC mRNA into the cytoplasm of neurons. Acts as a key regulator of synaptic plasticity: required for protein synthesis-dependent forms of long-term potentiation (LTP) and depression (LTD) and for the formation of long-term memory. Regulates synaptic plasticity by promoting endocytosis of AMPA receptors (AMPARs) in response to synaptic activity: this endocytic pathway maintains levels of surface AMPARs in response to chronic changes in neuronal activity through synaptic scaling, thereby contributing to neuronal homeostasis. Acts as a postsynaptic mediator of activity-dependent synapse elimination in the developing cerebellum by mediating elimination of surplus climbing fiber synapses. Accumulates at weaker synapses, probably to prevent their undesired enhancement. This suggests that ARC-containing virion-like capsids may be required to eliminate synaptic material. In Gallus gallus (Chicken), this protein is Activity-regulated cytoskeleton-associated protein.